The primary structure comprises 252 residues: Phosphoribosyl-ATP pyrophosphatase (252 aa).

It belongs to the PRA-PH family.

Its subcellular location is the cytoplasm. It carries out the reaction 1-(5-phospho-beta-D-ribosyl)-ATP + H2O = 1-(5-phospho-beta-D-ribosyl)-5'-AMP + diphosphate + H(+). The protein operates within amino-acid biosynthesis; L-histidine biosynthesis; L-histidine from 5-phospho-alpha-D-ribose 1-diphosphate: step 2/9. The sequence is that of Phosphoribosyl-ATP pyrophosphatase from Magnetococcus marinus (strain ATCC BAA-1437 / JCM 17883 / MC-1).